An 85-amino-acid polypeptide reads, in one-letter code: Probable oxaloacetate decarboxylase gamma chain (85 aa).

Residues 15 to 35 (ISGMGFVLLFLIVLIYAISFI) traverse the membrane as a helical segment.

Belongs to the OadG family. In terms of assembly, heterotrimer of an alpha, a beta and a gamma subunit. The cofactor is Na(+).

It localises to the cell membrane. It carries out the reaction oxaloacetate + 2 Na(+)(in) + H(+) = pyruvate + 2 Na(+)(out) + CO2. Catalyzes the decarboxylation of oxaloacetate coupled to Na(+) translocation. This chain is Probable oxaloacetate decarboxylase gamma chain, found in Actinobacillus pleuropneumoniae serotype 5b (strain L20).